Consider the following 609-residue polypeptide: Pogo transposable element with KRAB domain (609 aa).

Disordered stretches follow at residues 1-28 (MEST…ELED) and 100-127 (EGEE…SDVK). Residues 8 to 28 (LNLSLKEEEEEEEIQSRELED) are a coiled coil. Lys13 is covalently cross-linked (Glycyl lysine isopeptide (Lys-Gly) (interchain with G-Cter in SUMO2)). The KRAB domain occupies 47–118 (ALFDEVAIYF…DEWQLQGGTS (72 aa)). Positions 108–119 (SDEWQLQGGTSA) are enriched in polar residues. Positions 250-323 (AFRGPKNGRF…MRRYDLSLRH (74 aa)) constitute an HTH CENPB-type domain. Residues 353 to 567 (HDYEVAQMGN…ISSESIVQGF (215 aa)) enclose the DDE-1 domain. Lys384 is covalently cross-linked (Glycyl lysine isopeptide (Lys-Gly) (interchain with G-Cter in SUMO2)). The disordered stretch occupies residues 588–609 (SELPGGGEPPKDCDTESMAESN).

The protein localises to the nucleus. This is Pogo transposable element with KRAB domain (POGK) from Homo sapiens (Human).